A 549-amino-acid polypeptide reads, in one-letter code: Ceramide kinase 1 (549 aa).

Residues 162 to 316 form the DAGKc domain; it reads NRPKNIIIFI…VDVCTVHQHQ (155 aa). Residues 172–174 and 205–209 each bind ATP; these read NPF and TERAN. 233–236 contacts substrate; that stretch reads GGDG. Asp-235 serves as the catalytic Proton donor/acceptor. Residues Glu-240, 277 to 279, Arg-342, Arg-348, and 500 to 502 contribute to the ATP site; these read GSA and DGE.

It carries out the reaction an N-acylsphing-4-enine + ATP = an N-acylsphing-4-enine 1-phosphate + ADP + H(+). The catalysed reaction is an N-acyl-15-methylhexadecasphing-4-enine + ATP = an N-acyl-15-methylhexadecasphing-4-enine-1-phosphate + ADP + H(+). The protein operates within lipid metabolism; sphingolipid metabolism. Functionally, catalyzes the phosphorylation of ceramide to form ceramide 1-phosphate. C.elegans contain specific sphingoid bases, which are unique or different in structure compared to the sphingoid bases found in other animals. Two examples of these distinctive compounds are: 15-methylhexadecasphinganine and 15-methylhexadecasphing-4-enine. The polypeptide is Ceramide kinase 1 (Caenorhabditis elegans).